Here is an 803-residue protein sequence, read N- to C-terminus: Leucine--tRNA ligase (803 aa).

The 'HIGH' region signature appears at 40–51 (PYPSGAGLHVGH). Positions 575–579 (KMSKS) match the 'KMSKS' region motif. An ATP-binding site is contributed by Lys-578.

It belongs to the class-I aminoacyl-tRNA synthetase family.

The protein localises to the cytoplasm. The catalysed reaction is tRNA(Leu) + L-leucine + ATP = L-leucyl-tRNA(Leu) + AMP + diphosphate. The polypeptide is Leucine--tRNA ligase (Listeria welshimeri serovar 6b (strain ATCC 35897 / DSM 20650 / CCUG 15529 / CIP 8149 / NCTC 11857 / SLCC 5334 / V8)).